Here is a 546-residue protein sequence, read N- to C-terminus: CTP synthase (546 aa).

Residues 1–269 are amidoligase domain; the sequence is MNSNTKIIFV…DAKLVELLNL (269 aa). S16 provides a ligand contact to CTP. S16 contributes to the UTP binding site. ATP-binding positions include 17–22 and D74; that span reads SLGKGV. The Mg(2+) site is built by D74 and E143. Residues 150 to 152, 190 to 195, and K226 contribute to the CTP site; these read DIE and KTKPTQ. UTP contacts are provided by residues 190–195 and K226; that span reads KTKPTQ. The Glutamine amidotransferase type-1 domain occupies 294-546; that stretch reads IIAMVGKYVS…IQAAIENSNN (253 aa). Residue G356 participates in L-glutamine binding. C383 (nucleophile; for glutamine hydrolysis) is an active-site residue. L-glutamine-binding positions include 384–387, E407, and R474; that span reads LGMQ. Residues H519 and E521 contribute to the active site.

This sequence belongs to the CTP synthase family. In terms of assembly, homotetramer.

It carries out the reaction UTP + L-glutamine + ATP + H2O = CTP + L-glutamate + ADP + phosphate + 2 H(+). The enzyme catalyses L-glutamine + H2O = L-glutamate + NH4(+). It catalyses the reaction UTP + NH4(+) + ATP = CTP + ADP + phosphate + 2 H(+). It functions in the pathway pyrimidine metabolism; CTP biosynthesis via de novo pathway; CTP from UDP: step 2/2. With respect to regulation, allosterically activated by GTP, when glutamine is the substrate; GTP has no effect on the reaction when ammonia is the substrate. The allosteric effector GTP functions by stabilizing the protein conformation that binds the tetrahedral intermediate(s) formed during glutamine hydrolysis. Inhibited by the product CTP, via allosteric rather than competitive inhibition. Catalyzes the ATP-dependent amination of UTP to CTP with either L-glutamine or ammonia as the source of nitrogen. Regulates intracellular CTP levels through interactions with the four ribonucleotide triphosphates. The protein is CTP synthase of Francisella tularensis subsp. holarctica (strain FTNF002-00 / FTA).